We begin with the raw amino-acid sequence, 307 residues long: MLRVVEGIFIFVVISESVFGVLGNGFIGLVNCIDCAKNKLSTIGFILTGLAISRIFLIWIIITDGFIQIFSPNIYASSNLIEYISYFWVIGNQSSMWFATSLSIFYFLKIANFSNYIFLWLKSRTNMVLPFMIVFLLISSLLNFAYIAKILNDYKMKNDTVWDLNMYKSEYFIKQILLNLGVIFFFTLSLITCVLLIISLWRHNRQMQSNVTGLRDSNTEAHVKAMKVLISFIILFILYFIGMAIEISYFTVRENKLLLMFGMTTTAIYPWGHSFILILGNSKLKQASLRVLQQLKCCEKRKNLRVT.

Residues 1–6 (MLRVVE) lie on the Extracellular side of the membrane. A helical membrane pass occupies residues 7 to 27 (GIFIFVVISESVFGVLGNGFI). Residues 28–42 (GLVNCIDCAKNKLST) lie on the Cytoplasmic side of the membrane. A helical transmembrane segment spans residues 43–63 (IGFILTGLAISRIFLIWIIIT). Over 64–100 (DGFIQIFSPNIYASSNLIEYISYFWVIGNQSSMWFAT) the chain is Extracellular. Residues 101 to 121 (SLSIFYFLKIANFSNYIFLWL) form a helical membrane-spanning segment. Residues 122 to 126 (KSRTN) are Cytoplasmic-facing. Residues 127–147 (MVLPFMIVFLLISSLLNFAYI) form a helical membrane-spanning segment. The Extracellular portion of the chain corresponds to 148-179 (AKILNDYKMKNDTVWDLNMYKSEYFIKQILLN). N158 carries N-linked (GlcNAc...) asparagine glycosylation. A helical transmembrane segment spans residues 180–200 (LGVIFFFTLSLITCVLLIISL). The Cytoplasmic segment spans residues 201-227 (WRHNRQMQSNVTGLRDSNTEAHVKAMK). Residues 228-248 (VLISFIILFILYFIGMAIEIS) traverse the membrane as a helical segment. Topologically, residues 249–257 (YFTVRENKL) are extracellular. Residues 258–278 (LLMFGMTTTAIYPWGHSFILI) form a helical membrane-spanning segment. Over 279–307 (LGNSKLKQASLRVLQQLKCCEKRKNLRVT) the chain is Cytoplasmic.

It belongs to the G-protein coupled receptor T2R family.

Its subcellular location is the membrane. In terms of biological role, receptor that may play a role in the perception of bitterness and is gustducin-linked. May play a role in sensing the chemical composition of the gastrointestinal content. The activity of this receptor may stimulate alpha gustducin, mediate PLC-beta-2 activation and lead to the gating of TRPM5. The sequence is that of Taste receptor type 2 member 10 (TAS2R10) from Pan paniscus (Pygmy chimpanzee).